A 38-amino-acid polypeptide reads, in one-letter code: Photosystem II reaction center protein X 2 (38 aa).

Residues Phe8–Phe28 traverse the membrane as a helical segment.

Belongs to the PsbX family. Type 1 subfamily. As to quaternary structure, PSII is composed of 1 copy each of membrane proteins PsbA, PsbB, PsbC, PsbD, PsbE, PsbF, PsbH, PsbI, PsbJ, PsbK, PsbL, PsbM, PsbT, PsbX, PsbY, PsbZ, Psb30/Ycf12, peripheral proteins PsbO, CyanoQ (PsbQ), PsbU, PsbV and a large number of cofactors. It forms dimeric complexes.

Its subcellular location is the cellular thylakoid membrane. Involved in the binding and/or turnover of quinones at the Q(B) site of photosystem II (PSII). PSII is a light-driven water plastoquinone oxidoreductase, using light energy to abstract electrons from H(2)O, generating a proton gradient subsequently used for ATP formation. In Synechococcus sp. (strain JA-3-3Ab) (Cyanobacteria bacterium Yellowstone A-Prime), this protein is Photosystem II reaction center protein X 2.